The sequence spans 155 residues: Keratin-associated protein 4-7 (155 aa).

Repeat copies occupy residues 5 to 9 (CCGSV), 24 to 28 (CCRPS), 29 to 33 (CCQTT), 34 to 38 (CCRTT), 44 to 48 (CCVSS), 49 to 53 (CCRPQ), 54 to 58 (CCQSV), 59 to 63 (CCQPT), 64 to 68 (CCRPT), 69 to 73 (CCETT), 74 to 78 (CCHPR), 79 to 83 (CCISS), 84 to 88 (CCRPS), 89 to 93 (CCMSS), 94 to 98 (CCKPQ), 99 to 103 (CCQSV), 104 to 108 (CCQPT), 109 to 113 (CCRPS), 114 to 118 (CCRPC), and 119 to 123 (CCLRP). A 20 X 5 AA repeats of C-C-[GIKRQVHEML]-[SPTRV]-[STVQRCP] region spans residues 5–123 (CCGSVCSDQG…CCRPCCCLRP (119 aa)).

The protein belongs to the KRTAP type 4 family. As to quaternary structure, interacts with hair keratins. In terms of tissue distribution, expressed in the hair follicles.

Its function is as follows. In the hair cortex, hair keratin intermediate filaments are embedded in an interfilamentous matrix, consisting of hair keratin-associated proteins (KRTAP), which are essential for the formation of a rigid and resistant hair shaft through their extensive disulfide bond cross-linking with abundant cysteine residues of hair keratins. The matrix proteins include the high-sulfur and high-glycine-tyrosine keratins. This chain is Keratin-associated protein 4-7 (KRTAP4-7), found in Homo sapiens (Human).